We begin with the raw amino-acid sequence, 263 residues long: Imidazole glycerol phosphate synthase subunit HisF (263 aa).

Active-site residues include aspartate 11 and aspartate 131.

Belongs to the HisA/HisF family. As to quaternary structure, heterodimer of HisH and HisF.

Its subcellular location is the cytoplasm. The catalysed reaction is 5-[(5-phospho-1-deoxy-D-ribulos-1-ylimino)methylamino]-1-(5-phospho-beta-D-ribosyl)imidazole-4-carboxamide + L-glutamine = D-erythro-1-(imidazol-4-yl)glycerol 3-phosphate + 5-amino-1-(5-phospho-beta-D-ribosyl)imidazole-4-carboxamide + L-glutamate + H(+). It functions in the pathway amino-acid biosynthesis; L-histidine biosynthesis; L-histidine from 5-phospho-alpha-D-ribose 1-diphosphate: step 5/9. In terms of biological role, IGPS catalyzes the conversion of PRFAR and glutamine to IGP, AICAR and glutamate. The HisF subunit catalyzes the cyclization activity that produces IGP and AICAR from PRFAR using the ammonia provided by the HisH subunit. In Deinococcus geothermalis (strain DSM 11300 / CIP 105573 / AG-3a), this protein is Imidazole glycerol phosphate synthase subunit HisF.